The primary structure comprises 638 residues: Paramyosin (638 aa).

The stretch at 1–638 forms a coiled coil; that stretch reads FSPSTTRLES…EGDISVMQAD (638 aa).

This sequence belongs to the paramyosin family. In terms of assembly, homodimer.

It is found in the cytoplasm. The protein localises to the myofibril. Functionally, paramyosin is a major structural component of many thick filaments isolated from invertebrate muscles. The protein is Paramyosin of Opisthorchis felineus.